We begin with the raw amino-acid sequence, 261 residues long: Small ribosomal subunit protein uS2 (261 aa).

The protein belongs to the universal ribosomal protein uS2 family.

The protein is Small ribosomal subunit protein uS2 of Thermodesulfovibrio yellowstonii (strain ATCC 51303 / DSM 11347 / YP87).